The primary structure comprises 472 residues: Spliceosome-associated protein CWC27 homolog (472 aa).

An N-acetylserine modification is found at serine 2. One can recognise a PPIase cyclophilin-type domain in the interval 11-166; the sequence is TNGKVLLKTT…NPHKIKSCEV (156 aa). Asparagine 109 and asparagine 201 each carry an N-linked (GlcNAc...) asparagine glycan. The stretch at 206–230 forms a coiled coil; sequence SFGEEAEEEEEEVNRVSQSMKGKSK. Disordered regions lie at residues 206–386 and 398–472; these read SFGE…DQTL and QAIA…KERR. Positions 231 to 241 are enriched in basic and acidic residues; that stretch reads SSHDLLKDDPH. Acidic residues predominate over residues 257-268; that stretch reads DLVDDGEDESAE. 3 stretches are compositionally biased toward basic and acidic residues: residues 269 to 286, 304 to 347, and 359 to 371; these read HDEYIDGDEKNLMRERIA, EVEK…KRSE, and EYRREKQKYEALR. Residues 306–377 are a coiled coil; it reads EKKSVSRSEE…EALRKQQSKK (72 aa). Phosphoserine is present on serine 346. Acidic residues predominate over residues 404 to 418; that stretch reads PENDIPETEVEDDEG. 2 stretches are compositionally biased toward basic and acidic residues: residues 425–437 and 457–472; these read QFEDKSRKVKDAS and RREESKKLMREKKERR.

Belongs to the cyclophilin-type PPIase family. Part of the activated spliceosome B/catalytic step 1 spliceosome, one of the forms of the spliceosome which has a well-formed active site but still cannot catalyze the branching reaction and is composed at least of 52 proteins, the U2, U5 and U6 snRNAs and the pre-mRNA. Recruited during early steps of activated spliceosome B maturation, it is probably one of the first proteins released from this complex as he matures to the spliceosome C complex. Component of the minor spliceosome, which splices U12-type introns.

Its subcellular location is the nucleus. Functionally, as part of the spliceosome, plays a role in pre-mRNA splicing. Probable inactive PPIase with no peptidyl-prolyl cis-trans isomerase activity. As a component of the minor spliceosome, involved in the splicing of U12-type introns in pre-mRNAs. This Homo sapiens (Human) protein is Spliceosome-associated protein CWC27 homolog.